The primary structure comprises 333 residues: Probable endo-beta-1,4-glucanase B (333 aa).

Residues 1–17 (MKFRNLFFAAVAGSAVA) form the signal peptide. Residues N37 and N100 are each glycosylated (N-linked (GlcNAc...) asparagine). Catalysis depends on E160, which acts as the Proton donor. Catalysis depends on E267, which acts as the Nucleophile.

This sequence belongs to the glycosyl hydrolase 5 (cellulase A) family.

The protein localises to the secreted. It catalyses the reaction Endohydrolysis of (1-&gt;4)-beta-D-glucosidic linkages in cellulose, lichenin and cereal beta-D-glucans.. Functionally, has endoglucanase activity on substrates containing beta-1,4 glycosidic bonds, like in carboxymethylcellulose (CMC), hydroxyethylcellulose (HEC) and beta-glucan. Involved in the degradation of complex natural cellulosic substrates. The sequence is that of Probable endo-beta-1,4-glucanase B (eglB) from Aspergillus oryzae (strain ATCC 42149 / RIB 40) (Yellow koji mold).